Consider the following 234-residue polypeptide: Phosphoribosylformylglycinamidine synthase subunit PurQ (234 aa).

Residues 6-234 (VGVVVFPGSN…ESLFRSLTGV (229 aa)) enclose the Glutamine amidotransferase type-1 domain. Cys-89 acts as the Nucleophile in catalysis. Active-site residues include His-206 and Glu-208.

Part of the FGAM synthase complex composed of 1 PurL, 1 PurQ and 2 PurS subunits.

The protein resides in the cytoplasm. It catalyses the reaction N(2)-formyl-N(1)-(5-phospho-beta-D-ribosyl)glycinamide + L-glutamine + ATP + H2O = 2-formamido-N(1)-(5-O-phospho-beta-D-ribosyl)acetamidine + L-glutamate + ADP + phosphate + H(+). The catalysed reaction is L-glutamine + H2O = L-glutamate + NH4(+). It participates in purine metabolism; IMP biosynthesis via de novo pathway; 5-amino-1-(5-phospho-D-ribosyl)imidazole from N(2)-formyl-N(1)-(5-phospho-D-ribosyl)glycinamide: step 1/2. In terms of biological role, part of the phosphoribosylformylglycinamidine synthase complex involved in the purines biosynthetic pathway. Catalyzes the ATP-dependent conversion of formylglycinamide ribonucleotide (FGAR) and glutamine to yield formylglycinamidine ribonucleotide (FGAM) and glutamate. The FGAM synthase complex is composed of three subunits. PurQ produces an ammonia molecule by converting glutamine to glutamate. PurL transfers the ammonia molecule to FGAR to form FGAM in an ATP-dependent manner. PurS interacts with PurQ and PurL and is thought to assist in the transfer of the ammonia molecule from PurQ to PurL. The sequence is that of Phosphoribosylformylglycinamidine synthase subunit PurQ from Chlorobium chlorochromatii (strain CaD3).